The chain runs to 117 residues: Large ribosomal subunit protein bL19 (117 aa).

The protein belongs to the bacterial ribosomal protein bL19 family.

Functionally, this protein is located at the 30S-50S ribosomal subunit interface and may play a role in the structure and function of the aminoacyl-tRNA binding site. The sequence is that of Large ribosomal subunit protein bL19 from Shewanella halifaxensis (strain HAW-EB4).